The sequence spans 59 residues: UPF0181 protein YoaH (59 aa).

This sequence belongs to the UPF0181 family.

This chain is UPF0181 protein YoaH, found in Shigella flexneri.